The following is a 295-amino-acid chain: Voltage-gated potassium channel (295 aa).

Residues 1–38 (MSVERWVFPGCSVMARFRRGLSDLGGRVRNIGDVMEHP) are Cytoplasmic-facing. A helical transmembrane segment spans residues 39–63 (LVELGVSYAALLSVIVVVVEYTMQL). The Extracellular portion of the chain corresponds to 64-67 (SGEY). A helical transmembrane segment spans residues 68–92 (LVRLYLVDLILVIILWADYAYRAYK). Residues 93 to 96 (SGDP) lie on the Cytoplasmic side of the membrane. The segment at residues 97 to 105 (AGYVKKTLY) is an intramembrane region (helical). The Extracellular portion of the chain corresponds to 106-108 (EIP). The chain crosses the membrane as a helical; Voltage-sensor span at residues 109–125 (ALVPAGLLALIEGHLAG). Over 126–128 (LGL) the chain is Cytoplasmic. A helical; Voltage-sensor membrane pass occupies residues 129 to 145 (FRLVRLLRFLRILLIIS). Residues 146-159 (RGSKFLSAIADAAD) are Cytoplasmic-facing. Residues 160-184 (KIRFYHLFGAVMLTVLYGAFAIYIV) traverse the membrane as a helical segment. The Extracellular portion of the chain corresponds to 185–195 (EYPDPNSSIKS). Positions 196–208 (VFDALWWAVVTAT) form an intramembrane region, pore-forming. Positions 209–214 (TVGYGD) match the Selectivity filter motif. Over 209-221 (TVGYGDVVPATPI) the chain is Extracellular. A helical transmembrane segment spans residues 222–253 (GKVIGIAVMLTGISALTLLIGTVSNMFQKILV). At 254–295 (GEPEPSCSPAKLAEMVSSMSEEEFEEFVRTLKNLRRLENSMK) the chain is on the cytoplasmic side.

Belongs to the potassium channel family.

The protein localises to the cell membrane. In terms of biological role, mediates a strong voltage-dependent potassium ion permeability of excitable membranes. Assuming opened or closed conformations in response to the voltage difference across the membrane, the protein forms a potassium-selective channel through which potassium ions may pass in accordance with their electrochemical gradient. The protein is Voltage-gated potassium channel of Aeropyrum pernix (strain ATCC 700893 / DSM 11879 / JCM 9820 / NBRC 100138 / K1).